Consider the following 339-residue polypeptide: STEAP1 protein (339 aa).

2 helical membrane passes run 71 to 91 (WHLP…YTLL) and 119 to 139 (PMVS…AAIV). Positions 118-265 (LPMVSITLLA…KLGIVSLLLG (148 aa)) constitute a Ferric oxidoreductase domain. FAD-binding residues include Gln140 and Arg161. The next 2 helical transmembrane spans lie at 164 to 184 (FGLL…SYPM) and 218 to 238 (IYVS…VTSI). A heme b-binding site is contributed by His175. 2 residues coordinate FAD: Ser237 and Gln254. A run of 2 helical transmembrane segments spans residues 258–278 (GIVS…NKWI) and 291–311 (FMIA…LFLP). Residue His268 participates in heme b binding.

It belongs to the STEAP family. As to quaternary structure, homotrimer. FAD serves as cofactor. It depends on heme b as a cofactor. Ubiquitously expressed. Highly expressed in prostate tumors.

The protein localises to the endosome membrane. It localises to the cell membrane. Functionally, does not function as a metalloreductase due to the absence of binding sites for the electron-donating substrate NADPH. Promotes Fe(3+) reduction when fused to the NADPH-binding domain of STEAP4. This is STEAP1 protein (STEAP1) from Homo sapiens (Human).